Here is a 119-residue protein sequence, read N- to C-terminus: Ribonuclease P protein component (119 aa).

The protein belongs to the RnpA family. Consists of a catalytic RNA component (M1 or rnpB) and a protein subunit.

It catalyses the reaction Endonucleolytic cleavage of RNA, removing 5'-extranucleotides from tRNA precursor.. Its function is as follows. RNaseP catalyzes the removal of the 5'-leader sequence from pre-tRNA to produce the mature 5'-terminus. It can also cleave other RNA substrates such as 4.5S RNA. The protein component plays an auxiliary but essential role in vivo by binding to the 5'-leader sequence and broadening the substrate specificity of the ribozyme. This Bacillus cereus (strain ATCC 14579 / DSM 31 / CCUG 7414 / JCM 2152 / NBRC 15305 / NCIMB 9373 / NCTC 2599 / NRRL B-3711) protein is Ribonuclease P protein component.